Reading from the N-terminus, the 987-residue chain is Valine--tRNA ligase (987 aa).

The 'HIGH' region signature appears at 45-55; the sequence is PNVTGSLHMGH. The short motif at 634–638 is the 'KMSKS' region element; the sequence is KMSKS. K637 contributes to the ATP binding site. The stretch at 917-985 forms a coiled coil; that stretch reads VIDIGAEKAR…LSAALARLSE (69 aa).

The protein belongs to the class-I aminoacyl-tRNA synthetase family. ValS type 1 subfamily. Monomer.

The protein resides in the cytoplasm. The enzyme catalyses tRNA(Val) + L-valine + ATP = L-valyl-tRNA(Val) + AMP + diphosphate. Functionally, catalyzes the attachment of valine to tRNA(Val). As ValRS can inadvertently accommodate and process structurally similar amino acids such as threonine, to avoid such errors, it has a 'posttransfer' editing activity that hydrolyzes mischarged Thr-tRNA(Val) in a tRNA-dependent manner. The sequence is that of Valine--tRNA ligase from Cereibacter sphaeroides (strain ATCC 17029 / ATH 2.4.9) (Rhodobacter sphaeroides).